A 484-amino-acid polypeptide reads, in one-letter code: Protein nucleotidyltransferase YdiU (484 aa).

ATP contacts are provided by Gly-87, Gly-89, Arg-90, Lys-110, Asp-122, Gly-123, Arg-173, and Arg-180. Asp-249 functions as the Proton acceptor in the catalytic mechanism. Asn-250 and Asp-259 together coordinate Mg(2+). Asp-259 lines the ATP pocket. Residues 463–484 are disordered; it reads EQEKYAELPPPSDRPYRTFCGT.

It belongs to the SELO family. Mg(2+) is required as a cofactor. Requires Mn(2+) as cofactor.

It carries out the reaction L-seryl-[protein] + ATP = 3-O-(5'-adenylyl)-L-seryl-[protein] + diphosphate. The enzyme catalyses L-threonyl-[protein] + ATP = 3-O-(5'-adenylyl)-L-threonyl-[protein] + diphosphate. It catalyses the reaction L-tyrosyl-[protein] + ATP = O-(5'-adenylyl)-L-tyrosyl-[protein] + diphosphate. The catalysed reaction is L-histidyl-[protein] + UTP = N(tele)-(5'-uridylyl)-L-histidyl-[protein] + diphosphate. It carries out the reaction L-seryl-[protein] + UTP = O-(5'-uridylyl)-L-seryl-[protein] + diphosphate. The enzyme catalyses L-tyrosyl-[protein] + UTP = O-(5'-uridylyl)-L-tyrosyl-[protein] + diphosphate. Functionally, nucleotidyltransferase involved in the post-translational modification of proteins. It can catalyze the addition of adenosine monophosphate (AMP) or uridine monophosphate (UMP) to a protein, resulting in modifications known as AMPylation and UMPylation. This chain is Protein nucleotidyltransferase YdiU, found in Geobacillus kaustophilus (strain HTA426).